Here is a 594-residue protein sequence, read N- to C-terminus: AT-rich interactive domain-containing protein 5A (594 aa).

Residues methionine 1–glutamate 56 are disordered. Positions methionine 1–serine 300 are interaction with SOX9. Serine 23 is subject to Phosphoserine. One can recognise an ARID domain in the interval arginine 55–lysine 147. Glycyl lysine isopeptide (Lys-Gly) (interchain with G-Cter in ubiquitin) cross-links involve residues lysine 85 and lysine 94. The tract at residues leucine 146–serine 223 is disordered. The segment covering methionine 165–aspartate 189 has biased composition (basic and acidic residues). Residues serine 256 and serine 289 each carry the phosphoserine modification. 2 disordered regions span residues arginine 281 to alanine 331 and alanine 426 to histidine 454. Residues serine 297–glutamate 306 are compositionally biased toward polar residues. Serine 438 and serine 463 each carry phosphoserine.

As to quaternary structure, interacts with SOX9. Interacts with ESR1. Interacts with RORC. In terms of processing, phosphorylated by MAPK14 on serine residues involving a TLR4 signaling pathway upon lipopolysaccharide (LPS) stimulation leading to its ubiquitination and proteasomal degradation. Ubiquitinated leading to proteasomal degradation; involving WWP1 linked to MAPK14-mediated phosphorylation upon LPS stimulation.

Its subcellular location is the nucleus. Functionally, DNA-binding protein that may regulate transcription and act as a repressor by binding to AT-rich stretches in the promoter region of target genes. May positively regulate chondrocyte-specific transcription such as of COL2A1 in collaboration with SOX9 and positively regulate histone H3 acetylation at chondrocyte-specific genes. May stimulate early-stage chondrocyte differentiation and inhibit later stage differention. Can repress ESR1-mediated transcriptional activation; proposed to act as corepressor for selective nuclear hormone receptors. As an RNA-binding protein, involved in the regulation of inflammatory response by stabilizing selective inflammation-related mRNAs, such as STAT3 and TBX21. Also stabilizes IL6 mRNA. Binds to stem loop structures located in the 3'UTRs of IL6, STAT3 and TBX21 mRNAs; at least for STAT3 prevents binding of ZC3H12A to the mRNA stem loop structure thus inhibiting its degradation activity. Contributes to elevated IL6 levels possibly implicated in autoimmunity processes. IL6-dependent stabilization of STAT3 mRNA may promote differentiation of naive CD4+ T-cells into T-helper Th17 cells. In CD4+ T-cells may also inhibit RORC-induced Th17 cell differentiation independently of IL6 signaling. Stabilization of TBX21 mRNA contributes to elevated interferon-gamma secretion in Th1 cells possibly implicated in the establishment of septic shock. Stabilizes TNFRSF4/OX40 mRNA by binding to the conserved stem loop structure in its 3'UTR; thereby competing with the mRNA-destabilizing functions of RC3H1 and endoribonuclease ZC3H12A. This is AT-rich interactive domain-containing protein 5A (ARID5A) from Homo sapiens (Human).